The primary structure comprises 459 residues: Glutamyl-tRNA reductase (459 aa).

Residues 49–52 (TCNR), Ser109, 114–116 (EQQ), and Gln120 each bind substrate. Cys50 acts as the Nucleophile in catalysis. 189–194 (GAGAMG) lines the NADP(+) pocket.

This sequence belongs to the glutamyl-tRNA reductase family. As to quaternary structure, homodimer.

The enzyme catalyses (S)-4-amino-5-oxopentanoate + tRNA(Glu) + NADP(+) = L-glutamyl-tRNA(Glu) + NADPH + H(+). Its pathway is porphyrin-containing compound metabolism; protoporphyrin-IX biosynthesis; 5-aminolevulinate from L-glutamyl-tRNA(Glu): step 1/2. In terms of biological role, catalyzes the NADPH-dependent reduction of glutamyl-tRNA(Glu) to glutamate 1-semialdehyde (GSA). The chain is Glutamyl-tRNA reductase from Mycolicibacterium paratuberculosis (strain ATCC BAA-968 / K-10) (Mycobacterium paratuberculosis).